A 158-amino-acid polypeptide reads, in one-letter code: MNMDWALFLTFLAACGAPATTGALLKPDEWYDNLNKPWWNPPRWVFPLAWTSLYFLMSLAAMRVAQLEGSGQALAFYAAQLAFNTLWTPVFFGMKRMATALAVVMVMWLFVAATMWAFFQLDTWAGVLFVPYLIWATAATGLNFEAMRLNWNRPEARA.

5 helical membrane passes run 5–25, 44–65, 73–93, 97–119, and 124–144; these read WALF…GALL, WVFP…MRVA, ALAF…VFFG, MATA…WAFF, and WAGV…GLNF.

The protein belongs to the TspO/BZRP family. As to quaternary structure, homodimer.

Its subcellular location is the membrane. The protein localises to the cell inner membrane. Functionally, may play a role in the transmembrane transport of tetrapyrroles and similar compounds, and thereby contribute to the regulation of tetrapyrrole biosynthesis. Binds tetrapyrroles and promotes the photooxidative degradation of protoporphyrin IX. Binds protoporphyrin IX, hemin, and coproporphyrin III, but does not bind delta-aminolevulinic acid. Can bind bilirubin, curcumin, gossypol, retinoic acid, cholesterol and the benzodiazepine receptor agonist PK-11195 (in vitro). Plays a role in the response to low oxygen levels and in the regulation of the biosynthesis of photosynthetic pigments. The sequence is that of Tryptophan-rich sensory protein from Cereibacter sphaeroides (Rhodobacter sphaeroides).